A 242-amino-acid polypeptide reads, in one-letter code: 1-(5-phosphoribosyl)-5-[(5-phosphoribosylamino)methylideneamino] imidazole-4-carboxamide isomerase (242 aa).

D8 acts as the Proton acceptor in catalysis. D129 acts as the Proton donor in catalysis.

This sequence belongs to the HisA/HisF family.

The protein resides in the cytoplasm. It catalyses the reaction 1-(5-phospho-beta-D-ribosyl)-5-[(5-phospho-beta-D-ribosylamino)methylideneamino]imidazole-4-carboxamide = 5-[(5-phospho-1-deoxy-D-ribulos-1-ylimino)methylamino]-1-(5-phospho-beta-D-ribosyl)imidazole-4-carboxamide. It participates in amino-acid biosynthesis; L-histidine biosynthesis; L-histidine from 5-phospho-alpha-D-ribose 1-diphosphate: step 4/9. The protein is 1-(5-phosphoribosyl)-5-[(5-phosphoribosylamino)methylideneamino] imidazole-4-carboxamide isomerase of Clostridium botulinum (strain ATCC 19397 / Type A).